A 235-amino-acid polypeptide reads, in one-letter code: NAD(P)H-hydrate epimerase (235 aa).

In terms of domain architecture, YjeF N-terminal spans 18 to 221; sequence AAKIDEQLFS…GLVEEHGLQM (204 aa). 65–69 lines the (6S)-NADPHX pocket; it reads NNGGD. Asn66 and Asp127 together coordinate K(+). (6S)-NADPHX contacts are provided by residues 131–137 and Asp160; that span reads GFSFKPP. Ser163 provides a ligand contact to K(+).

The protein belongs to the NnrE/AIBP family. The cofactor is K(+).

The enzyme catalyses (6R)-NADHX = (6S)-NADHX. It carries out the reaction (6R)-NADPHX = (6S)-NADPHX. Functionally, catalyzes the epimerization of the S- and R-forms of NAD(P)HX, a damaged form of NAD(P)H that is a result of enzymatic or heat-dependent hydration. This is a prerequisite for the S-specific NAD(P)H-hydrate dehydratase to allow the repair of both epimers of NAD(P)HX. This Caenorhabditis briggsae protein is NAD(P)H-hydrate epimerase.